Consider the following 278-residue polypeptide: 4-hydroxy-3-methylbut-2-enyl diphosphate reductase (278 aa).

A [4Fe-4S] cluster-binding site is contributed by Cys-12. His-40 and His-75 together coordinate (2E)-4-hydroxy-3-methylbut-2-enyl diphosphate. Residues His-40 and His-75 each contribute to the dimethylallyl diphosphate site. Residues His-40 and His-75 each coordinate isopentenyl diphosphate. Cys-97 is a [4Fe-4S] cluster binding site. His-125 is a (2E)-4-hydroxy-3-methylbut-2-enyl diphosphate binding site. His-125 serves as a coordination point for dimethylallyl diphosphate. His-125 serves as a coordination point for isopentenyl diphosphate. The active-site Proton donor is the Glu-127. Thr-157 contacts (2E)-4-hydroxy-3-methylbut-2-enyl diphosphate. Cys-187 contributes to the [4Fe-4S] cluster binding site. The (2E)-4-hydroxy-3-methylbut-2-enyl diphosphate site is built by Ser-215, Ser-216, Asn-217, and Ser-258. The dimethylallyl diphosphate site is built by Ser-215, Ser-216, Asn-217, and Ser-258. Residues Ser-215, Ser-216, Asn-217, and Ser-258 each contribute to the isopentenyl diphosphate site.

It belongs to the IspH family. [4Fe-4S] cluster is required as a cofactor.

It catalyses the reaction isopentenyl diphosphate + 2 oxidized [2Fe-2S]-[ferredoxin] + H2O = (2E)-4-hydroxy-3-methylbut-2-enyl diphosphate + 2 reduced [2Fe-2S]-[ferredoxin] + 2 H(+). The enzyme catalyses dimethylallyl diphosphate + 2 oxidized [2Fe-2S]-[ferredoxin] + H2O = (2E)-4-hydroxy-3-methylbut-2-enyl diphosphate + 2 reduced [2Fe-2S]-[ferredoxin] + 2 H(+). It functions in the pathway isoprenoid biosynthesis; dimethylallyl diphosphate biosynthesis; dimethylallyl diphosphate from (2E)-4-hydroxy-3-methylbutenyl diphosphate: step 1/1. It participates in isoprenoid biosynthesis; isopentenyl diphosphate biosynthesis via DXP pathway; isopentenyl diphosphate from 1-deoxy-D-xylulose 5-phosphate: step 6/6. Its function is as follows. Catalyzes the conversion of 1-hydroxy-2-methyl-2-(E)-butenyl 4-diphosphate (HMBPP) into a mixture of isopentenyl diphosphate (IPP) and dimethylallyl diphosphate (DMAPP). Acts in the terminal step of the DOXP/MEP pathway for isoprenoid precursor biosynthesis. In Pseudothermotoga lettingae (strain ATCC BAA-301 / DSM 14385 / NBRC 107922 / TMO) (Thermotoga lettingae), this protein is 4-hydroxy-3-methylbut-2-enyl diphosphate reductase.